Here is an 850-residue protein sequence, read N- to C-terminus: Bifunctional levopimaradiene synthase, chloroplastic (850 aa).

The transit peptide at 1 to 52 directs the protein to the chloroplast; the sequence is MALPSSSLSSQIHTGATTQCIPHFHGSLNAGTSAGKRRSLYLRWGKGPSKIV. Lysine 250 provides a ligand contact to substrate. Residues aspartate 383 and aspartate 385 each coordinate Mg(2+). Positions 383–386 match the DXDD motif motif; it reads DIDD. Lysine 470 lines the substrate pocket. Mg(2+) contacts are provided by aspartate 602, aspartate 606, asparagine 746, threonine 750, and glutamate 754. The DDXXD motif motif lies at 602–606; the sequence is DDLYD.

It belongs to the terpene synthase family. Tpsd subfamily. Requires Mg(2+) as cofactor. In terms of tissue distribution, expressed in young tissues such as flushing buds and green bark tissues. Lower levels in mature needles and bark.

It localises to the plastid. It is found in the chloroplast. It carries out the reaction (2E,6E,10E)-geranylgeranyl diphosphate = (+)-copalyl diphosphate. The catalysed reaction is (+)-copalyl diphosphate = abieta-8(14),12-diene + diphosphate. The enzyme catalyses (+)-copalyl diphosphate = neoabietadiene + diphosphate. Its pathway is terpene metabolism; oleoresin biosynthesis. In terms of biological role, involved in defensive oleoresin formation in conifers in response to insect attack or other injury. Involved in diterpene (C20) olefins biosynthesis. Bifunctional enzyme that catalyzes two sequential cyclizations of geranylgeranyl diphosphate (GGPP) to levopimaradiene. Levopimaradiene is the major products of the enzyme followed by abietadiene, neoabietadiene and palustradiene. No activity with geranyl diphosphate (GPP) or farnesyl diphosphate (FPP) as substrate. This chain is Bifunctional levopimaradiene synthase, chloroplastic (LPS), found in Pinus taeda (Loblolly pine).